The following is a 198-amino-acid chain: Sensory transduction protein RegX3 (198 aa).

Residues 1-87 (MVTDGPAALA…ELIARIRAVL (87 aa)) form the Response regulatory domain. 4-aspartylphosphate is present on aspartate 23. The segment at residues 99-198 (DGVLESGPLR…VRGLGYKLES (100 aa)) is a DNA-binding region (ompR/PhoB-type).

In terms of processing, phosphorylated by SenX3.

Member of the two-component regulatory system SenX3/RegX3. The sequence is that of Sensory transduction protein RegX3 (rgx3) from Mycobacterium leprae (strain TN).